The following is a 394-amino-acid chain: Elongation factor Tu 2 (394 aa).

The 195-residue stretch at 10–204 (KPHVNVGTIG…ALDSYIPEPE (195 aa)) folds into the tr-type G domain. The G1 stretch occupies residues 19–26 (GHVDHGKT). 19-26 (GHVDHGKT) contributes to the GTP binding site. Residue threonine 26 coordinates Mg(2+). Residues 60-64 (GITIS) form a G2 region. The segment at 81-84 (DCPG) is G3. GTP is bound by residues 81–85 (DCPGH) and 136–139 (NKCD). Residues 136-139 (NKCD) are G4. Positions 174–176 (SAL) are G5.

Belongs to the TRAFAC class translation factor GTPase superfamily. Classic translation factor GTPase family. EF-Tu/EF-1A subfamily. As to quaternary structure, monomer.

The protein resides in the cytoplasm. It carries out the reaction GTP + H2O = GDP + phosphate + H(+). In terms of biological role, GTP hydrolase that promotes the GTP-dependent binding of aminoacyl-tRNA to the A-site of ribosomes during protein biosynthesis. The chain is Elongation factor Tu 2 from Photorhabdus laumondii subsp. laumondii (strain DSM 15139 / CIP 105565 / TT01) (Photorhabdus luminescens subsp. laumondii).